Reading from the N-terminus, the 242-residue chain is MNSKLKFIYEGKAKKIFAYEDSDKVIIEFKDDATAFNALKKAKFEGKGELNCLISSKIFEFLIKNNIPTHYIGLKNNNSMIAQKIKIIPLEVVLRNTAYGSLCKQTTIKPGTVLESPLIDFYLKNDTLNDPLLTKDRINLLKIVDEEELDFISNMTLKINKLLKKFFYNIKLDLVDFKLEFGYNSNGQIVLGDEISPDNCRLWDLNQKNGMIVSLDKDRFRNDLGGFIEAYSEINKRINNFI.

Belongs to the SAICAR synthetase family.

The catalysed reaction is 5-amino-1-(5-phospho-D-ribosyl)imidazole-4-carboxylate + L-aspartate + ATP = (2S)-2-[5-amino-1-(5-phospho-beta-D-ribosyl)imidazole-4-carboxamido]succinate + ADP + phosphate + 2 H(+). The protein operates within purine metabolism; IMP biosynthesis via de novo pathway; 5-amino-1-(5-phospho-D-ribosyl)imidazole-4-carboxamide from 5-amino-1-(5-phospho-D-ribosyl)imidazole-4-carboxylate: step 1/2. This Prochlorococcus marinus subsp. pastoris (strain CCMP1986 / NIES-2087 / MED4) protein is Phosphoribosylaminoimidazole-succinocarboxamide synthase.